Consider the following 380-residue polypeptide: Alcohol dehydrogenase 1 (380 aa).

Cysteine 48, threonine 50, histidine 70, cysteine 100, cysteine 103, cysteine 106, cysteine 114, and cysteine 178 together coordinate Zn(2+). Threonine 50 and histidine 70 together coordinate an alcohol. Residue threonine 50 participates in NAD(+) binding. NAD(+)-binding positions include glycine 203–glycine 208, aspartate 227, arginine 232, threonine 273, valine 296, valine 296–valine 298, phenylalanine 323, and arginine 373.

This sequence belongs to the zinc-containing alcohol dehydrogenase family. Homodimer. Homotetramer. Requires Zn(2+) as cofactor.

The protein localises to the cytoplasm. The catalysed reaction is a primary alcohol + NAD(+) = an aldehyde + NADH + H(+). It catalyses the reaction a secondary alcohol + NAD(+) = a ketone + NADH + H(+). The protein is Alcohol dehydrogenase 1 (ADH1) of Solanum tuberosum (Potato).